A 509-amino-acid polypeptide reads, in one-letter code: FAD-linked oxidoreductase dpmaF (509 aa).

The N-terminal stretch at 1–21 (MTRLSLQLIAGLAGQAWLVNS) is a signal peptide. Residues 59-231 (LQYEPIAVAV…AEYGFETFPA (173 aa)) form the FAD-binding PCMH-type domain. Asn-125, Asn-193, and Asn-281 each carry an N-linked (GlcNAc...) asparagine glycan.

It belongs to the oxygen-dependent FAD-linked oxidoreductase family. FAD serves as cofactor.

It participates in secondary metabolite biosynthesis; terpenoid biosynthesis. In terms of biological role, FAD-linked oxidoreductase; part of the gene cluster that mediates the biosynthesis of the diterpenoid pyrones subglutinols A and B. The first step of the pathway is the synthesis of the alpha-pyrone moiety by the polyketide synthase dpmaA via condensation of one acetyl-CoA starter unit with 3 malonyl-CoA units and 2 methylations. The alpha-pyrone is then combined with geranylgeranyl pyrophosphate (GGPP) formed by the GGPP synthase dpmaD through the action of the prenyltransferase dpmaC to yield a linear alpha-pyrone diterpenoid. Subsequent steps in the diterpenoid pyrone biosynthetic pathway involve the decalin core formation, which is initiated by the epoxidation of the C10-C11 olefin by the FAD-dependent oxidoreductase dpmaE, and is followed by a cyclization cascade catalyzed by the terpene cyclase dpmaB. The dehydrogenase dpmaF is then involved in tetrahydrofuran (THF) ring formation at the C5 unit to complete the formation of subglutinols A and B. The protein is FAD-linked oxidoreductase dpmaF of Metarhizium anisopliae (Entomophthora anisopliae).